The primary structure comprises 140 residues: MCCYCVCCTVSDFILYIVAFFFPPAAVLLRSGPCSSDFLLNVLLTLLGFLPGMLHAFYYITITSPLRNAEYVYYYQQGWVDSERNVPSNRPQNSQTPQNRPQQGSSARNVYPSVETPLLQGAAPHDNKQSLVESPPPYVP.

Over 1–8 the chain is Cytoplasmic; sequence MCCYCVCC. 5 S-palmitoyl cysteine lipidation sites follow: Cys-2, Cys-3, Cys-5, Cys-7, and Cys-8. The chain crosses the membrane as a helical span at residues 9–29; sequence TVSDFILYIVAFFFPPAAVLL. The Vacuolar portion of the chain corresponds to 30-41; the sequence is RSGPCSSDFLLN. Residues 42–62 form a helical membrane-spanning segment; it reads VLLTLLGFLPGMLHAFYYITI. Residues 63-140 are Cytoplasmic-facing; the sequence is TSPLRNAEYV…LVESPPPYVP (78 aa). The tract at residues 84–140 is disordered; that stretch reads RNVPSNRPQNSQTPQNRPQQGSSARNVYPSVETPLLQGAAPHDNKQSLVESPPPYVP. Residues 85-108 are compositionally biased toward polar residues; it reads NVPSNRPQNSQTPQNRPQQGSSAR. Residue Lys-128 forms a Glycyl lysine isopeptide (Lys-Gly) (interchain with G-Cter in ubiquitin) linkage. Position 134 is a phosphoserine (Ser-134).

It belongs to the UPF0057 (PMP3) family.

Its subcellular location is the vacuole membrane. This is Protein SNA4 (SNA4) from Saccharomyces cerevisiae (strain ATCC 204508 / S288c) (Baker's yeast).